A 238-amino-acid chain; its full sequence is Transcriptional activator protein AnoR (238 aa).

The region spanning 170–236 (EFSQFNLYLT…SAAIRAVMLG (67 aa)) is the HTH luxR-type domain. Residues 195 to 214 (SAEIAQIIGVTERTVNFHLC) constitute a DNA-binding region (H-T-H motif).

The protein belongs to the autoinducer-regulated transcriptional regulatory protein family.

Functionally, positively regulates the expression of anoI. Required for biofilm formation and motility. Probably part of a quorum-sensing system with AnoI. This Acinetobacter nosocomialis protein is Transcriptional activator protein AnoR.